Consider the following 442-residue polypeptide: 5-methylthioadenosine/S-adenosylhomocysteine deaminase (442 aa).

Zn(2+) contacts are provided by H72 and H74. Residues E101 and H194 each coordinate substrate. H221 is a Zn(2+) binding site. The substrate site is built by E224 and D309. D309 is a Zn(2+) binding site.

This sequence belongs to the metallo-dependent hydrolases superfamily. MTA/SAH deaminase family. The cofactor is Zn(2+).

The enzyme catalyses S-adenosyl-L-homocysteine + H2O + H(+) = S-inosyl-L-homocysteine + NH4(+). It catalyses the reaction S-methyl-5'-thioadenosine + H2O + H(+) = S-methyl-5'-thioinosine + NH4(+). In terms of biological role, catalyzes the deamination of 5-methylthioadenosine and S-adenosyl-L-homocysteine into 5-methylthioinosine and S-inosyl-L-homocysteine, respectively. Is also able to deaminate adenosine. This chain is 5-methylthioadenosine/S-adenosylhomocysteine deaminase, found in Teredinibacter turnerae (strain ATCC 39867 / T7901).